A 254-amino-acid polypeptide reads, in one-letter code: Imidazole glycerol phosphate synthase subunit HisF (254 aa).

Catalysis depends on residues aspartate 12 and aspartate 131.

It belongs to the HisA/HisF family. In terms of assembly, heterodimer of HisH and HisF.

The protein localises to the cytoplasm. It catalyses the reaction 5-[(5-phospho-1-deoxy-D-ribulos-1-ylimino)methylamino]-1-(5-phospho-beta-D-ribosyl)imidazole-4-carboxamide + L-glutamine = D-erythro-1-(imidazol-4-yl)glycerol 3-phosphate + 5-amino-1-(5-phospho-beta-D-ribosyl)imidazole-4-carboxamide + L-glutamate + H(+). It participates in amino-acid biosynthesis; L-histidine biosynthesis; L-histidine from 5-phospho-alpha-D-ribose 1-diphosphate: step 5/9. Its function is as follows. IGPS catalyzes the conversion of PRFAR and glutamine to IGP, AICAR and glutamate. The HisF subunit catalyzes the cyclization activity that produces IGP and AICAR from PRFAR using the ammonia provided by the HisH subunit. This chain is Imidazole glycerol phosphate synthase subunit HisF, found in Corynebacterium aurimucosum (strain ATCC 700975 / DSM 44827 / CIP 107346 / CN-1) (Corynebacterium nigricans).